The chain runs to 79 residues: ATP synthase subunit c (79 aa).

The next 2 membrane-spanning stretches (helical) occupy residues 11–31 and 53–73; these read MAAAVMMGLAAIGAAIGIGIL and FFIVMGLVDAIPMIAVGLGLY.

It belongs to the ATPase C chain family. F-type ATPases have 2 components, F(1) - the catalytic core - and F(0) - the membrane proton channel. F(1) has five subunits: alpha(3), beta(3), gamma(1), delta(1), epsilon(1). F(0) has three main subunits: a(1), b(2) and c(10-14). The alpha and beta chains form an alternating ring which encloses part of the gamma chain. F(1) is attached to F(0) by a central stalk formed by the gamma and epsilon chains, while a peripheral stalk is formed by the delta and b chains.

It is found in the cell inner membrane. Functionally, f(1)F(0) ATP synthase produces ATP from ADP in the presence of a proton or sodium gradient. F-type ATPases consist of two structural domains, F(1) containing the extramembraneous catalytic core and F(0) containing the membrane proton channel, linked together by a central stalk and a peripheral stalk. During catalysis, ATP synthesis in the catalytic domain of F(1) is coupled via a rotary mechanism of the central stalk subunits to proton translocation. Its function is as follows. Key component of the F(0) channel; it plays a direct role in translocation across the membrane. A homomeric c-ring of between 10-14 subunits forms the central stalk rotor element with the F(1) delta and epsilon subunits. This is ATP synthase subunit c from Citrobacter koseri (strain ATCC BAA-895 / CDC 4225-83 / SGSC4696).